Consider the following 134-residue polypeptide: Retinol-binding protein 2 (134 aa).

The all-trans-retinol site is built by lysine 41 and glutamine 109.

The protein belongs to the calycin superfamily. Fatty-acid binding protein (FABP) family. Expressed in prenatal liver, intestine and lung, and in adult intestine.

The protein resides in the cytoplasm. In terms of biological role, intracellular transport of retinol. The sequence is that of Retinol-binding protein 2 (Rbp2) from Mus musculus (Mouse).